The sequence spans 270 residues: Putative pyruvate, phosphate dikinase regulatory protein (270 aa).

An ADP-binding site is contributed by 151 to 158 (GVSRTSKT).

Belongs to the pyruvate, phosphate/water dikinase regulatory protein family. PDRP subfamily.

It catalyses the reaction N(tele)-phospho-L-histidyl/L-threonyl-[pyruvate, phosphate dikinase] + ADP = N(tele)-phospho-L-histidyl/O-phospho-L-threonyl-[pyruvate, phosphate dikinase] + AMP + H(+). It carries out the reaction N(tele)-phospho-L-histidyl/O-phospho-L-threonyl-[pyruvate, phosphate dikinase] + phosphate + H(+) = N(tele)-phospho-L-histidyl/L-threonyl-[pyruvate, phosphate dikinase] + diphosphate. Functionally, bifunctional serine/threonine kinase and phosphorylase involved in the regulation of the pyruvate, phosphate dikinase (PPDK) by catalyzing its phosphorylation/dephosphorylation. This Streptococcus gordonii (strain Challis / ATCC 35105 / BCRC 15272 / CH1 / DL1 / V288) protein is Putative pyruvate, phosphate dikinase regulatory protein.